Consider the following 520-residue polypeptide: MQTPKPTLELLTCDAAYRENPTALFHQVCGDRPATLLLESADIDSKDDLKSLLLVDSALRITALGDTVTIQALSDNGASLLPLLDTALPAGVENDVLPAGRVLRFPPVSPLLDEDARLCSLSVFDAFRLLQGVVNIPTQEREAMFFGGLFAYDLVAGFEALPHLEAGNNCPDYCFYLAETLMVIDHQKKSTRIQASLFTASDREKQRLNARLAYLSQQLTQPAPPLPVTPVPDMRCECNQSDDAFGAVVRQLQKAIRAGEIFQVVPSRRFSLPCPSPLAAYYVLKKSNPSPYMFFMQDNDFTLFGASPESSLKYDAASRQIEIYPIAGTRPRGRRADGTLDRDLDSRIELDMRTDHKELSEHLMLVDLARNDLARICTPGSRYVADLTKVDRYSYVMHLVSRVVGELRHDLDALHAYRACMNMGTLSGAPKVRAMQLIADAEGQRRGSYGGAVGYFTAHGDLDTCIVIRSALVENGIATVQAGAGIVLDSVPQSEADETRNKARAVLRAIATAHHAQETF.

Residues Ser40, Lys50, and 291–293 (PYM) contribute to the L-tryptophan site. 328-329 (GT) serves as a coordination point for chorismate. Mg(2+) is bound at residue Glu361. Chorismate-binding positions include Tyr449, Arg469, 483–485 (GAG), and Gly485. Mg(2+) is bound at residue Glu498.

It belongs to the anthranilate synthase component I family. Homodimer. In fact, exists in a monomer-dimer equilibrium in solution, shifted spontaneously in favor of the dimer; the monomer has a reduced activity compared with the dimer. Heterotetramer consisting of two non-identical subunits: a beta subunit (TrpG) and a large alpha subunit (TrpE) (Potential). Mg(2+) is required as a cofactor.

The catalysed reaction is chorismate + L-glutamine = anthranilate + pyruvate + L-glutamate + H(+). It participates in amino-acid biosynthesis; L-tryptophan biosynthesis; L-tryptophan from chorismate: step 1/5. With respect to regulation, cooperatively feedback inhibited by tryptophan. Its function is as follows. Part of a heterotetrameric complex that catalyzes the two-step biosynthesis of anthranilate, an intermediate in the biosynthesis of L-tryptophan. In the first step, the glutamine-binding beta subunit (TrpG) of anthranilate synthase (AS) provides the glutamine amidotransferase activity which generates ammonia as a substrate that, along with chorismate, is used in the second step, catalyzed by the large alpha subunit of AS (TrpE) to produce anthranilate. In the absence of TrpG, TrpE can synthesize anthranilate directly from chorismate and high concentrations of ammonia. This Salmonella typhimurium (strain LT2 / SGSC1412 / ATCC 700720) protein is Anthranilate synthase component 1 (trpE).